We begin with the raw amino-acid sequence, 511 residues long: Bifunctional purine biosynthesis protein PurH (511 aa).

The MGS-like domain maps to 1-145 (MKKRALVSVS…KNHKFVSVIV (145 aa)).

Belongs to the PurH family.

It carries out the reaction (6R)-10-formyltetrahydrofolate + 5-amino-1-(5-phospho-beta-D-ribosyl)imidazole-4-carboxamide = 5-formamido-1-(5-phospho-D-ribosyl)imidazole-4-carboxamide + (6S)-5,6,7,8-tetrahydrofolate. The catalysed reaction is IMP + H2O = 5-formamido-1-(5-phospho-D-ribosyl)imidazole-4-carboxamide. It functions in the pathway purine metabolism; IMP biosynthesis via de novo pathway; 5-formamido-1-(5-phospho-D-ribosyl)imidazole-4-carboxamide from 5-amino-1-(5-phospho-D-ribosyl)imidazole-4-carboxamide (10-formyl THF route): step 1/1. Its pathway is purine metabolism; IMP biosynthesis via de novo pathway; IMP from 5-formamido-1-(5-phospho-D-ribosyl)imidazole-4-carboxamide: step 1/1. The polypeptide is Bifunctional purine biosynthesis protein PurH (Bacillus cereus (strain ATCC 10987 / NRS 248)).